We begin with the raw amino-acid sequence, 198 residues long: FMN-dependent NADH:quinone oxidoreductase 6 (198 aa).

Residue 96 to 99 coordinates FMN; it reads MYNF.

Belongs to the azoreductase type 1 family. In terms of assembly, homodimer. It depends on FMN as a cofactor.

It catalyses the reaction 2 a quinone + NADH + H(+) = 2 a 1,4-benzosemiquinone + NAD(+). The enzyme catalyses N,N-dimethyl-1,4-phenylenediamine + anthranilate + 2 NAD(+) = 2-(4-dimethylaminophenyl)diazenylbenzoate + 2 NADH + 2 H(+). Functionally, quinone reductase that provides resistance to thiol-specific stress caused by electrophilic quinones. Also exhibits azoreductase activity. Catalyzes the reductive cleavage of the azo bond in aromatic azo compounds to the corresponding amines. This is FMN-dependent NADH:quinone oxidoreductase 6 from Burkholderia lata (strain ATCC 17760 / DSM 23089 / LMG 22485 / NCIMB 9086 / R18194 / 383).